The chain runs to 411 residues: Arginine deiminase (411 aa).

The active-site Amidino-cysteine intermediate is cysteine 401.

This sequence belongs to the arginine deiminase family.

It is found in the cytoplasm. It catalyses the reaction L-arginine + H2O = L-citrulline + NH4(+). It participates in amino-acid degradation; L-arginine degradation via ADI pathway; carbamoyl phosphate from L-arginine: step 1/2. The polypeptide is Arginine deiminase (Staphylococcus epidermidis (strain ATCC 35984 / DSM 28319 / BCRC 17069 / CCUG 31568 / BM 3577 / RP62A)).